A 180-amino-acid polypeptide reads, in one-letter code: Large ribosomal subunit protein uL6 (180 aa).

Belongs to the universal ribosomal protein uL6 family. Part of the 50S ribosomal subunit.

Functionally, this protein binds to the 23S rRNA, and is important in its secondary structure. It is located near the subunit interface in the base of the L7/L12 stalk, and near the tRNA binding site of the peptidyltransferase center. The polypeptide is Large ribosomal subunit protein uL6 (Thermoanaerobacter sp. (strain X514)).